We begin with the raw amino-acid sequence, 243 residues long: Homeobox protein nob-1 (243 aa).

The span at 1–12 (MISVMQQMINND) shows a compositional bias: polar residues. Disordered stretches follow at residues 1–23 (MISV…SITS) and 40–67 (SIQG…TGMV). The segment at residues 162-221 (GKKKRQPYKKDQISRLEYEYSVNQYLTNKRRSELSAQLMLDEKQVKVWFQNRRMKDKKLR) is a DNA-binding region (homeobox).

This sequence belongs to the abd-b homeobox family. As to quaternary structure, interacts with nuclear receptor nhr-25. Interacts with geminin homolog gmn-1. Interacts with homeodomain protein ceh-20.

It is found in the nucleus. Transcription factor, involved in posterior embryonic patterning, morphogenetic movements of the posterior hypodermis, and cell fate specification. Binds to the 5'-TAGT-3' motif in regulatory elements of genes, including Meis protein psa-3 and microRNA mir-57. Involved in a negative regulatory loop with mir-57 to specify posterior cell identities. Required for asymmetric division of the T hypodermal cell, acting via the regulation of asymmetric expression of psa-3 in cooperation with ceh-20 and the Wnt-MAPK pathway. Involved in the regulation of the onset of non-apoptotic cell death in the linker cell, acting together with the Wnt signaling pathway. Involved in promoting embryogenesis, in concert with orphan nuclear receptor nhr-25. May regulate expression of transcription factor dmd-3. In Caenorhabditis elegans, this protein is Homeobox protein nob-1.